The primary structure comprises 202 residues: Regulator of G-protein signaling 16 (202 aa).

2 S-palmitoyl cysteine lipidation sites follow: cysteine 2 and cysteine 12. The RGS domain maps to 65–181 (SFDLLLSSKN…LKSPAYRDLA (117 aa)). At tyrosine 168 the chain carries Phosphotyrosine; by EGFR. Residue tyrosine 177 is modified to Phosphotyrosine. Residues 183–202 (QATAASASPSSSSPAEPLHT) are disordered.

In terms of assembly, interacts with GNAI1 and GNAQ. Interacts with GNAI3, GNAI3 and GNAO1. Palmitoylated on Cys-2 and/or Cys-12. In terms of processing, phosphorylated. Phosphorylation at Tyr-168 by EGFR enhances GTPase accelerating (GAP) activity toward GNAI1.

Its subcellular location is the membrane. In terms of biological role, regulates G protein-coupled receptor signaling cascades. Inhibits signal transduction by increasing the GTPase activity of G protein alpha subunits, thereby driving them into their inactive GDP-bound form. Plays an important role in the phototransduction cascade by regulating the lifetime and effective concentration of activated transducin alpha. May regulate extra and intracellular mitogenic signals. The polypeptide is Regulator of G-protein signaling 16 (RGS16) (Bos taurus (Bovine)).